The following is an 843-amino-acid chain: MAGEYSGSRSSNTQLLAELEALSENLYQKPQVSVGNRRTNSLALPRSSVPSLVTSADEVSTARAEDLTVSKPRARRLSLSPWRSRPKLEVEEEENVTQSNRIVKKPEESSSGSGVKEEKKGIWNWKPIRGLVRIGMQKLSCLLSVEVVAAQNLPASMNGLRLGVCVRKKETKDGAVQTMPCRVSQGSADFEETLFIKCHVYYSPANGKGSPAKFEARPFLFYLFAVDAKELEFGRHVVDLSELIQESVEKMNYEGARVRQWDMNWGLSGKAKGGELALKLGFQIMEKDGGAGIYSKQGEFGMKPSSKPKNFANSFGRKQSKTSFSVPSPKMTSRSEAWTPASGVESVSDFHGMEHLNLDEPEEKPEEKPVQKNDKPEQRAEDDQEEPDFEVVDKGVEFDDDLETEKSDGTIGERSVEMKEQHVNVDDPRHIMRLTELDSIAKQIKALESMMKDESDGGDGETESQRLDEEEQTVTKEFLQLLEDEETEKLKFYQHKMDISELRSGESVDDESENYLSDLGKGIGCVVQTRDGGYLVSMNPFDTVVMRKDTPKLVMQISKQIVVLPEAGPATGFELFHRMAGSGEELESKISSLMAIDELMGKTGEQVAFEGIASAIIQGRNKERANTSAARTVAAVKTMANAMSSGRRERIMTGIWNVEENPLTSAEEVLAVSLQKLEEMVVEGLKIQADMVDDEAPFEVSAAKGQKNPLESTIPLEEWQKEHRTQQKLTVLATVQLRDPTRRYEAVGGTVVVAVQAEEEEEKGLKVGSLHIGGVKKDAAEKRRLTAAQWLVEHGMGKKGKKKSNIKKKEKEEEEEEMLWSLSSRVMADMWLKSIRNPDVKLH.

The span at 30-58 (PQVSVGNRRTNSLALPRSSVPSLVTSADE) shows a compositional bias: polar residues. Disordered regions lie at residues 30–65 (PQVS…ARAE) and 88–116 (LEVE…SGVK). The C2 NT-type domain maps to 131–284 (LVRIGMQKLS…ELALKLGFQI (154 aa)). Disordered regions lie at residues 300-412 (FGMK…GTIG) and 450-472 (MMKD…EEEQ). Positions 307-336 (KPKNFANSFGRKQSKTSFSVPSPKMTSRSE) are enriched in polar residues. A phosphoserine mark is found at S314 and S328. The segment covering 365–381 (PEEKPVQKNDKPEQRAE) has biased composition (basic and acidic residues). Position 404 is a phosphothreonine (T404). S407 carries the phosphoserine modification. T410 is subject to Phosphothreonine. Acidic residues predominate over residues 456-472 (DGGDGETESQRLDEEEQ). Position 507 is a phosphoserine (S507).

Expressed in leaves, stems, cauline leaves, and flowers but not in roots. Present in leaves in both mesophyll and pavement cells.

Its subcellular location is the cytoplasm. Necessary for chloroplast and nuclear photorelocation movements via the regulation of chloroplast-actin (cp-actin) filaments in mesophyll cells, and together with PMIR1, in pavement cells. Required component for both the low- and high-light-dependent chloroplast movement responses via an abscisic acid (ABA) pathway. Involved in the ABA response pathway during seed germination. Modulates ABA accumulation during periods of water deficit at the seedling stage. This is Protein PLASTID MOVEMENT IMPAIRED 1 from Arabidopsis thaliana (Mouse-ear cress).